A 179-amino-acid polypeptide reads, in one-letter code: ATP-dependent protease subunit HslV (179 aa).

The active site involves Thr5. Na(+)-binding residues include Cys164 and Thr167.

Belongs to the peptidase T1B family. HslV subfamily. A double ring-shaped homohexamer of HslV is capped on each side by a ring-shaped HslU homohexamer. The assembly of the HslU/HslV complex is dependent on binding of ATP.

It localises to the cytoplasm. The enzyme catalyses ATP-dependent cleavage of peptide bonds with broad specificity.. Its activity is regulated as follows. Allosterically activated by HslU binding. In terms of biological role, protease subunit of a proteasome-like degradation complex believed to be a general protein degrading machinery. This Carboxydothermus hydrogenoformans (strain ATCC BAA-161 / DSM 6008 / Z-2901) protein is ATP-dependent protease subunit HslV.